The following is a 305-amino-acid chain: Serine/threonine-protein phosphatase PP2A catalytic subunit (305 aa).

Mn(2+) contacts are provided by D53, H55, D81, and N113. The active-site Proton donor is H114. Residues H163 and H237 each coordinate Mn(2+).

This sequence belongs to the PPP phosphatase family. PP-2A subfamily. It depends on Mn(2+) as a cofactor.

It carries out the reaction O-phospho-L-seryl-[protein] + H2O = L-seryl-[protein] + phosphate. The enzyme catalyses O-phospho-L-threonyl-[protein] + H2O = L-threonyl-[protein] + phosphate. In Helianthus annuus (Common sunflower), this protein is Serine/threonine-protein phosphatase PP2A catalytic subunit.